The sequence spans 234 residues: Orotidine 5'-phosphate decarboxylase (234 aa).

Substrate contacts are provided by residues aspartate 10, lysine 32, 59–68 (DLKLHDIPTT), threonine 122, arginine 184, glutamine 193, glycine 213, and arginine 214. The active-site Proton donor is lysine 61.

Belongs to the OMP decarboxylase family. Type 1 subfamily. Homodimer.

The catalysed reaction is orotidine 5'-phosphate + H(+) = UMP + CO2. The protein operates within pyrimidine metabolism; UMP biosynthesis via de novo pathway; UMP from orotate: step 2/2. Functionally, catalyzes the decarboxylation of orotidine 5'-monophosphate (OMP) to uridine 5'-monophosphate (UMP). This is Orotidine 5'-phosphate decarboxylase from Bacillus pumilus (strain SAFR-032).